Consider the following 159-residue polypeptide: Ribosomal RNA large subunit methyltransferase H (159 aa).

Residues leucine 76, glycine 108, and 127-132 (FSKMTF) contribute to the S-adenosyl-L-methionine site.

It belongs to the RNA methyltransferase RlmH family. Homodimer.

It localises to the cytoplasm. It catalyses the reaction pseudouridine(1915) in 23S rRNA + S-adenosyl-L-methionine = N(3)-methylpseudouridine(1915) in 23S rRNA + S-adenosyl-L-homocysteine + H(+). Its function is as follows. Specifically methylates the pseudouridine at position 1915 (m3Psi1915) in 23S rRNA. The protein is Ribosomal RNA large subunit methyltransferase H of Clostridium botulinum (strain Okra / Type B1).